We begin with the raw amino-acid sequence, 488 residues long: Protein nucleotidyltransferase YdiU (488 aa).

Residues Gly91, Gly93, Arg94, Lys114, Asp126, Gly127, Arg177, and Arg184 each contribute to the ATP site. Residue Asp253 is the Proton acceptor of the active site. Residues Asn254 and Asp263 each coordinate Mg(2+). Asp263 serves as a coordination point for ATP.

Belongs to the SELO family. It depends on Mg(2+) as a cofactor. Requires Mn(2+) as cofactor.

It catalyses the reaction L-seryl-[protein] + ATP = 3-O-(5'-adenylyl)-L-seryl-[protein] + diphosphate. The enzyme catalyses L-threonyl-[protein] + ATP = 3-O-(5'-adenylyl)-L-threonyl-[protein] + diphosphate. The catalysed reaction is L-tyrosyl-[protein] + ATP = O-(5'-adenylyl)-L-tyrosyl-[protein] + diphosphate. It carries out the reaction L-histidyl-[protein] + UTP = N(tele)-(5'-uridylyl)-L-histidyl-[protein] + diphosphate. It catalyses the reaction L-seryl-[protein] + UTP = O-(5'-uridylyl)-L-seryl-[protein] + diphosphate. The enzyme catalyses L-tyrosyl-[protein] + UTP = O-(5'-uridylyl)-L-tyrosyl-[protein] + diphosphate. Functionally, nucleotidyltransferase involved in the post-translational modification of proteins. It can catalyze the addition of adenosine monophosphate (AMP) or uridine monophosphate (UMP) to a protein, resulting in modifications known as AMPylation and UMPylation. The polypeptide is Protein nucleotidyltransferase YdiU (Bacillus thuringiensis subsp. konkukian (strain 97-27)).